Here is a 102-residue protein sequence, read N- to C-terminus: Small ribosomal subunit protein uS10 (102 aa).

The protein belongs to the universal ribosomal protein uS10 family. Part of the 30S ribosomal subunit.

Functionally, involved in the binding of tRNA to the ribosomes. This is Small ribosomal subunit protein uS10 from Staphylococcus aureus (strain JH9).